The sequence spans 309 residues: Homoserine O-succinyltransferase (309 aa).

The active-site Acyl-thioester intermediate is the C142. Substrate contacts are provided by K163 and S192. The Proton acceptor role is filled by H235. The active site involves E237. R249 contributes to the substrate binding site.

Belongs to the MetA family.

Its subcellular location is the cytoplasm. The catalysed reaction is L-homoserine + succinyl-CoA = O-succinyl-L-homoserine + CoA. It functions in the pathway amino-acid biosynthesis; L-methionine biosynthesis via de novo pathway; O-succinyl-L-homoserine from L-homoserine: step 1/1. In terms of biological role, transfers a succinyl group from succinyl-CoA to L-homoserine, forming succinyl-L-homoserine. In Photorhabdus laumondii subsp. laumondii (strain DSM 15139 / CIP 105565 / TT01) (Photorhabdus luminescens subsp. laumondii), this protein is Homoserine O-succinyltransferase.